A 292-amino-acid polypeptide reads, in one-letter code: Elongation factor Ts (292 aa).

The involved in Mg(2+) ion dislocation from EF-Tu stretch occupies residues 79 to 82 (TDFV).

The protein belongs to the EF-Ts family.

It localises to the cytoplasm. In terms of biological role, associates with the EF-Tu.GDP complex and induces the exchange of GDP to GTP. It remains bound to the aminoacyl-tRNA.EF-Tu.GTP complex up to the GTP hydrolysis stage on the ribosome. The sequence is that of Elongation factor Ts from Xanthomonas euvesicatoria pv. vesicatoria (strain 85-10) (Xanthomonas campestris pv. vesicatoria).